Reading from the N-terminus, the 724-residue chain is Catalase-peroxidase (724 aa).

The tract at residues 1–26 is disordered; sequence MDENKTKPTGKCPVMHGGNTSTGSSN. The segment at residues 98–225 is a cross-link (tryptophyl-tyrosyl-methioninium (Trp-Tyr) (with M-251)); the sequence is WHSAGSYRTT…LAAVQMGLIY (128 aa). Residue His99 is the Proton acceptor of the active site. Positions 225 to 251 form a cross-link, tryptophyl-tyrosyl-methioninium (Tyr-Met) (with W-98); the sequence is YVNPEGVDGKSDPLRTAQDMRVTFSRM. Heme b is bound at residue His266.

The protein belongs to the peroxidase family. Peroxidase/catalase subfamily. In terms of assembly, homodimer or homotetramer. Heme b serves as cofactor. Post-translationally, formation of the three residue Trp-Tyr-Met cross-link is important for the catalase, but not the peroxidase activity of the enzyme.

It carries out the reaction H2O2 + AH2 = A + 2 H2O. It catalyses the reaction 2 H2O2 = O2 + 2 H2O. Bifunctional enzyme with both catalase and broad-spectrum peroxidase activity. The protein is Catalase-peroxidase of Pectobacterium atrosepticum (strain SCRI 1043 / ATCC BAA-672) (Erwinia carotovora subsp. atroseptica).